The primary structure comprises 492 residues: Probable cytochrome P450 516B1 (492 aa).

Residues 1–17 traverse the membrane as a helical segment; sequence MYLILSLIIFLAYVAFH. A heme-binding site is contributed by Cys438.

The protein belongs to the cytochrome P450 family. Heme serves as cofactor.

It localises to the membrane. This is Probable cytochrome P450 516B1 (cyp516B1) from Dictyostelium discoideum (Social amoeba).